A 376-amino-acid chain; its full sequence is Chaperone protein DnaJ 2 (376 aa).

The J domain occupies 5 to 70; the sequence is DYYEVLGVNR…QKRAAYDRYG (66 aa). A CR-type zinc finger spans residues 135–213; the sequence is GADKTIRIPT…CGGAGRVKRQ (79 aa). Residues C148, C151, C165, C168, C187, C190, C201, and C204 each contribute to the Zn(2+) site. 4 CXXCXGXG motif repeats span residues 148-155, 165-172, 187-194, and 201-208; these read CETCHGSG, CPTCGGAG, CPKCHGTG, and CRDCGGAG.

The protein belongs to the DnaJ family. Homodimer. Requires Zn(2+) as cofactor.

Its subcellular location is the cytoplasm. Its function is as follows. Participates actively in the response to hyperosmotic and heat shock by preventing the aggregation of stress-denatured proteins and by disaggregating proteins, also in an autonomous, DnaK-independent fashion. Unfolded proteins bind initially to DnaJ; upon interaction with the DnaJ-bound protein, DnaK hydrolyzes its bound ATP, resulting in the formation of a stable complex. GrpE releases ADP from DnaK; ATP binding to DnaK triggers the release of the substrate protein, thus completing the reaction cycle. Several rounds of ATP-dependent interactions between DnaJ, DnaK and GrpE are required for fully efficient folding. Also involved, together with DnaK and GrpE, in the DNA replication of plasmids through activation of initiation proteins. The sequence is that of Chaperone protein DnaJ 2 from Aromatoleum aromaticum (strain DSM 19018 / LMG 30748 / EbN1) (Azoarcus sp. (strain EbN1)).